The primary structure comprises 177 residues: MFYRLLFASLWYILPAYVANASACIFGGGTPVDLGKNFIDGRRLIGNGVTYRGCIFGILCGTLVGLIQGILVDFNIFNSLDFYGTVLDHVILAFFLSVGAIVGDAVGSFIKRRLNIERGKPAPLLDQLDFVIGALAFGYIVAPIPYEMIIIICLFTVFVHLLGNIIAYKLGIKDVWW.

The next 5 membrane-spanning stretches (helical) occupy residues 6–26, 54–74, 90–110, 124–144, and 148–168; these read LFAS…ACIF, CIFG…LVDF, VILA…GSFI, LLDQ…VAPI, and MIII…IIAY.

It belongs to the CDP-archaeol synthase family. Mg(2+) serves as cofactor.

The protein localises to the cell membrane. It catalyses the reaction 2,3-bis-O-(geranylgeranyl)-sn-glycerol 1-phosphate + CTP + H(+) = CDP-2,3-bis-O-(geranylgeranyl)-sn-glycerol + diphosphate. The protein operates within membrane lipid metabolism; glycerophospholipid metabolism. Catalyzes the formation of CDP-2,3-bis-(O-geranylgeranyl)-sn-glycerol (CDP-archaeol) from 2,3-bis-(O-geranylgeranyl)-sn-glycerol 1-phosphate (DGGGP) and CTP. This reaction is the third ether-bond-formation step in the biosynthesis of archaeal membrane lipids. The polypeptide is CDP-archaeol synthase (Methanocaldococcus jannaschii (strain ATCC 43067 / DSM 2661 / JAL-1 / JCM 10045 / NBRC 100440) (Methanococcus jannaschii)).